Consider the following 224-residue polypeptide: Urease accessory protein UreF (224 aa).

The protein belongs to the UreF family. In terms of assembly, ureD, UreF and UreG form a complex that acts as a GTP-hydrolysis-dependent molecular chaperone, activating the urease apoprotein by helping to assemble the nickel containing metallocenter of UreC. The UreE protein probably delivers the nickel.

It localises to the cytoplasm. Functionally, required for maturation of urease via the functional incorporation of the urease nickel metallocenter. This Pseudomonas fluorescens (strain SBW25) protein is Urease accessory protein UreF.